Consider the following 870-residue polypeptide: Radial spoke head 10 homolog B (870 aa).

The span at 1–16 (MVKEKKKADKKGEKSA) shows a compositional bias: basic and acidic residues. A disordered region spans residues 1–43 (MVKEKKKADKKGEKSARSPSSLSDNLDFSKQDGNTTRQEMSPA). Positions 17 to 39 (RSPSSLSDNLDFSKQDGNTTRQE) are enriched in polar residues. 10 MORN repeats span residues 86 to 108 (YEGE…GGCT), 109 to 131 (YRGM…DGLK), 132 to 154 (YEGD…DGSM), 155 to 177 (YEGE…TQPV), 179 to 201 (YIGH…QEGT), 204 to 226 (YEGD…SGNI), 227 to 249 (YEGQ…TTNE), 251 to 273 (YTGR…LKRI), 284 to 306 (YIGE…SGAM), and 307 to 329 (YDGE…NGRV). The disordered stretch occupies residues 674-704 (NKSPSAVMSHESDAAHSDSARSSSSKLELSP). A compositionally biased stretch (basic and acidic residues) spans 683–692 (HESDAAHSDS). The span at 693-703 (ARSSSSKLELS) shows a compositional bias: low complexity. Residues 784 to 811 (KEKIRADRLRSTAQAQQRKMEDDELEAR) are a coiled coil. The disordered stretch occupies residues 840-870 (VSSSHLILDPPKEDVTVSPSSKTITSKKKKK).

Interacts with RSPH6A. Does not appear to be part of the axonemal radial spoke complexes 1 or 2.

The protein localises to the cytoplasm. It localises to the cytoskeleton. Its subcellular location is the cilium axoneme. It is found in the cell projection. The protein resides in the cilium. The protein localises to the flagellum. Its function is as follows. May function as part of the axonemal radial spoke complex 3 (RS3). Radial spoke complexes are important for ciliary motility. This is Radial spoke head 10 homolog B (RSPH10B) from Homo sapiens (Human).